The sequence spans 657 residues: Serine/threonine kinase NLK (657 aa).

Residues 208 to 554 (SQPDRPIGYG…VEEALSHPYL (347 aa)) form the Protein kinase domain. ATP is bound by residues 214–222 (IGYGAFGVV) and Lys-237. Asp-391 functions as the Proton acceptor in the catalytic mechanism.

Belongs to the protein kinase superfamily. Ser/Thr protein kinase family. In terms of assembly, component of the beta-catenin-lit-1 complex (also called the lit-1/wrm-1 complex or the wrm-1/lit-1 kinase complex) at least composed of lit-1 and wrm-1. Interacts with wrm-1 (via N-terminus); the interaction is direct and activates lit-1 kinase activity which leads to the phosphorylation of pop-1. This promotes pop-1 interaction with par-5 and translocation of pop-1 from the nucleus to the cytoplasm. Interacts with pop-1 (when phosphorylated on 'Ser-125'); the interaction is dependent on the beta-catenin-lit-1 complex. The cofactor is Mg(2+).

It is found in the cytoplasm. The protein localises to the cell cortex. It localises to the nucleus. It catalyses the reaction L-seryl-[protein] + ATP = O-phospho-L-seryl-[protein] + ADP + H(+). The enzyme catalyses L-threonyl-[protein] + ATP = O-phospho-L-threonyl-[protein] + ADP + H(+). Its function is as follows. Has a role in the Wnt signaling pathway controlling the asymmetry of cell divisions during embryogenesis. Operates in the AB and EMS cell lineages influencing cell specification. Required for body wall muscle development, endoderm development, pop-1 asymmetry and T-cell division asymmetry. Component of the beta-catenin-lit-1 complex which promotes the phosphorylation, down-regulation and subcellular relocation of pop-1. Regulates plp-1 nuclear localization in embryos. Plays a role in male tail tip morphogenesis. This chain is Serine/threonine kinase NLK, found in Caenorhabditis briggsae.